The chain runs to 312 residues: Cytochrome c biogenesis protein CcsA (312 aa).

A run of 8 helical transmembrane segments spans residues Leu-18–Phe-38, Phe-48–Ser-68, Ile-73–Leu-93, Ile-102–Leu-122, Val-148–Ile-168, Ser-216–Asn-236, Thr-250–Ile-267, and Phe-279–Ile-299.

The protein belongs to the CcmF/CycK/Ccl1/NrfE/CcsA family. As to quaternary structure, may interact with ccs1.

It localises to the cellular thylakoid membrane. Its function is as follows. Required during biogenesis of c-type cytochromes (cytochrome c6 and cytochrome f) at the step of heme attachment. The protein is Cytochrome c biogenesis protein CcsA of Prochlorococcus marinus (strain MIT 9515).